The following is a 753-amino-acid chain: Photosystem I P700 chlorophyll a apoprotein A1 (753 aa).

The next 8 helical transmembrane spans lie at 73–96, 159–182, 198–222, 294–312, 349–372, 388–414, 436–458, and 534–552; these read IFSA…YHGA, LYCT…FHYH, LNHH…HVSL, TAHH…GHMY, WHAQ…HHMY, LSLF…IFMV, AIVS…LYIH, and FLVH…LILL. [4Fe-4S] cluster-binding residues include Cys576 and Cys585. The next 2 membrane-spanning stretches (helical) occupy residues 592 to 613 and 667 to 689; these read HVFL…HFSW and LSAY…MFLF. His678 is a chlorophyll a' binding site. The chlorophyll a site is built by Met686 and Tyr694. Trp695 contacts phylloquinone. Residues 727–747 traverse the membrane as a helical segment; that stretch reads AVGVAHYLLGGIVTTWAFFLA.

The protein belongs to the PsaA/PsaB family. In terms of assembly, the PsaA/B heterodimer binds the P700 chlorophyll special pair and subsequent electron acceptors. PSI consists of a core antenna complex that captures photons, and an electron transfer chain that converts photonic excitation into a charge separation. The eukaryotic PSI reaction center is composed of at least 11 subunits. It depends on P700 is a chlorophyll a/chlorophyll a' dimer, A0 is one or more chlorophyll a, A1 is one or both phylloquinones and FX is a shared 4Fe-4S iron-sulfur center. as a cofactor.

Its subcellular location is the plastid. The protein resides in the chloroplast thylakoid membrane. The enzyme catalyses reduced [plastocyanin] + hnu + oxidized [2Fe-2S]-[ferredoxin] = oxidized [plastocyanin] + reduced [2Fe-2S]-[ferredoxin]. Its function is as follows. PsaA and PsaB bind P700, the primary electron donor of photosystem I (PSI), as well as the electron acceptors A0, A1 and FX. PSI is a plastocyanin-ferredoxin oxidoreductase, converting photonic excitation into a charge separation, which transfers an electron from the donor P700 chlorophyll pair to the spectroscopically characterized acceptors A0, A1, FX, FA and FB in turn. Oxidized P700 is reduced on the lumenal side of the thylakoid membrane by plastocyanin. The protein is Photosystem I P700 chlorophyll a apoprotein A1 of Pinus thunbergii (Japanese black pine).